We begin with the raw amino-acid sequence, 453 residues long: UPF0210 protein Mbur_0828 (453 aa).

The protein belongs to the UPF0210 family.

The protein is UPF0210 protein Mbur_0828 of Methanococcoides burtonii (strain DSM 6242 / NBRC 107633 / OCM 468 / ACE-M).